The chain runs to 146 residues: uncharacterized protein (146 aa).

Residues 7 to 24 (VIALFLVTGLTLYAIRLL) form a helical membrane-spanning segment.

The protein localises to the membrane. This is an uncharacterized protein from Haemophilus influenzae (strain ATCC 51907 / DSM 11121 / KW20 / Rd).